The primary structure comprises 273 residues: Kit ligand (273 aa).

The first 25 residues, Met1–Thr25, serve as a signal peptide directing secretion. At Glu26–His214 the chain is on the extracellular side. Disulfide bonds link Cys29–Cys114 and Cys68–Cys163. Residues Asn90 and Asn118 are each glycosylated (N-linked (GlcNAc...) asparagine; partial). A glycan (N-linked (GlcNAc...) asparagine) is linked at Asn145. Residue Ser167 is glycosylated (O-linked (GalNAc...) serine). O-linked (GalNAc...) threonine glycans are attached at residues Thr168 and Thr180. Asn195 is a glycosylation site (N-linked (GlcNAc...) asparagine). A helical membrane pass occupies residues Trp215 to Trp237. At Lys238–Val273 the chain is on the cytoplasmic side.

Belongs to the SCF family. Homodimer, non-covalently linked. Heterotetramer with KIT, binding two KIT molecules; thereby mediates KIT dimerization and subsequent activation by autophosphorylation. In terms of processing, a soluble form (sKITLG) is produced by proteolytic processing of isoform 1 in the extracellular domain. Found in two differentially glycosylated forms, LMW-SCF and HMW-SCF. LMW-SCF is fully N-glycosylated at Asn-145, partially N-glycosylated at Asn-90, O-glycosylated at Ser-167, Thr-168 and Thr-180, and not glycosylated at Asn-97 or Asn-118. HMW-SCF is N-glycosylated at Asn-118, Asn-90 and Asn-145, O-glycosylated at Ser-167, Thr-168 and Thr-180, and not glycosylated at Asn-97. Post-translationally, a soluble form exists as a cleavage product of the extracellular domain.

Its subcellular location is the cell membrane. The protein resides in the cytoplasm. The protein localises to the cytoskeleton. It is found in the cell projection. It localises to the lamellipodium. Its subcellular location is the filopodium. The protein resides in the secreted. Ligand for the receptor-type protein-tyrosine kinase KIT. Plays an essential role in the regulation of cell survival and proliferation, hematopoiesis, stem cell maintenance, gametogenesis, mast cell development, migration and function, and in melanogenesis. KITLG/SCF binding can activate several signaling pathways. Promotes phosphorylation of PIK3R1, the regulatory subunit of phosphatidylinositol 3-kinase, and subsequent activation of the kinase AKT1. KITLG/SCF and KIT also transmit signals via GRB2 and activation of RAS, RAF1 and the MAP kinases MAPK1/ERK2 and/or MAPK3/ERK1. KITLG/SCF and KIT promote activation of STAT family members STAT1, STAT3 and STAT5. KITLG/SCF and KIT promote activation of PLCG1, leading to the production of the cellular signaling molecules diacylglycerol and inositol 1,4,5-trisphosphate. KITLG/SCF acts synergistically with other cytokines, probably interleukins. The polypeptide is Kit ligand (Homo sapiens (Human)).